The primary structure comprises 216 residues: Adenylate kinase (216 aa).

11 to 16 serves as a coordination point for ATP; sequence GSGKGT. Residues 31–60 form an NMP region; that stretch reads ATGDLFRKAIERGDELGDTVKSYMERGELV. AMP is bound by residues Thr32, Arg37, 58-60, 86-89, and Gln93; these read ELV and GFPR. The segment at 127–163 is LID; it reads GRWVCRSCQSPYQCGCAEVAEGKCSRCQGELYQRPDD. Arg128 lines the ATP pocket. Residues Cys131, Cys134, Cys150, and Cys153 each contribute to the Zn(2+) site. Residues Arg160 and Arg171 each coordinate AMP. Position 199 (Ala199) interacts with ATP.

The protein belongs to the adenylate kinase family. Monomer.

It is found in the cytoplasm. The catalysed reaction is AMP + ATP = 2 ADP. It functions in the pathway purine metabolism; AMP biosynthesis via salvage pathway; AMP from ADP: step 1/1. Functionally, catalyzes the reversible transfer of the terminal phosphate group between ATP and AMP. Plays an important role in cellular energy homeostasis and in adenine nucleotide metabolism. In Dehalococcoides mccartyi (strain ATCC BAA-2266 / KCTC 15142 / 195) (Dehalococcoides ethenogenes (strain 195)), this protein is Adenylate kinase.